Here is a 271-residue protein sequence, read N- to C-terminus: Ribosomal RNA small subunit methyltransferase I (271 aa).

The protein belongs to the methyltransferase superfamily. RsmI family.

Its subcellular location is the cytoplasm. The catalysed reaction is cytidine(1402) in 16S rRNA + S-adenosyl-L-methionine = 2'-O-methylcytidine(1402) in 16S rRNA + S-adenosyl-L-homocysteine + H(+). Functionally, catalyzes the 2'-O-methylation of the ribose of cytidine 1402 (C1402) in 16S rRNA. The chain is Ribosomal RNA small subunit methyltransferase I from Campylobacter fetus subsp. fetus (strain 82-40).